Consider the following 346-residue polypeptide: Rhomboid protein 1, mitochondrial (346 aa).

The N-terminal 73 residues, 1-73, are a transit peptide targeting the mitochondrion; that stretch reads MSGVSSVMLG…RFFSQTSILK (73 aa). A run of 6 helical transmembrane segments spans residues 109-129, 145-165, 203-223, 246-266, 275-295, and 308-328; these read SMTI…PYLF, LVYA…LPKC, MLAL…SNFF, LAIV…LGCF, ILLF…ASVA, and FDYA…WYIS. Catalysis depends on Ser-256, which acts as the Nucleophile. Residue His-313 is part of the active site.

The protein belongs to the peptidase S54 family.

The protein resides in the mitochondrion inner membrane. It carries out the reaction Cleaves type-1 transmembrane domains using a catalytic dyad composed of serine and histidine that are contributed by different transmembrane domains.. In terms of biological role, mitochondrial rhomboid serine protease processing the mitochondrial membrane fusion regulator MGM1, and the cytochrome c peroxidase (CCP1). Required for TIM11 stability, ATP synthase complex assembly, mitochondrial morphology, cytochrome c (CYC1) storage and mitochondrial genome maintenance. This is Rhomboid protein 1, mitochondrial (PCP1) from Saccharomyces cerevisiae (strain ATCC 204508 / S288c) (Baker's yeast).